A 107-amino-acid polypeptide reads, in one-letter code: Serine-rich and transmembrane domain-containing protein 1 (107 aa).

The chain crosses the membrane as a helical span at residues 43–63; that stretch reads IYVSIFLSLLAFLLLLLIIAL.

The protein resides in the membrane. This chain is Serine-rich and transmembrane domain-containing protein 1 (SERTM1), found in Homo sapiens (Human).